The chain runs to 397 residues: 2-oxoglutarate and iron-dependent oxygenase domain-containing protein ICU11 (397 aa).

The tract at residues Met-1–Leu-56 is disordered. A compositionally biased stretch (low complexity) spans Gln-18–Pro-27. The Fe2OG dioxygenase domain maps to Ser-238 to Ser-339. Residues His-260, Asp-262, and His-320 each coordinate Fe cation. 2-oxoglutarate is bound at residue Arg-330.

The cofactor is Fe(2+). Requires L-ascorbate as cofactor. As to expression, expressed in roots, cotyledons, rosette leaves, cauline leaves and inflorescences.

Its subcellular location is the nucleus. It localises to the nucleoplasm. Participates in the epigenetic repression of flowering genes in association with CP2. Functions in the repression of several members of the MADS-box transcription factors family, including SEP3, during vegetative development via histone modification. The polypeptide is 2-oxoglutarate and iron-dependent oxygenase domain-containing protein ICU11 (Arabidopsis thaliana (Mouse-ear cress)).